Consider the following 540-residue polypeptide: FAD-binding monooxygenase lolF1 (540 aa).

FAD-binding positions include 43–46 (VWRE) and 55–58 (DSLF). NADP(+) is bound by residues 53–55 (AVD), 182–188 (TGPSGVQ), and 205–206 (QS).

This sequence belongs to the FAD-binding monooxygenase family. FAD is required as a cofactor.

It participates in alkaloid biosynthesis. In terms of biological role, FAD-binding monooxygenase; part of the gene cluster that mediates the biosynthesis of loline alkaloids, potent insecticidal agents composed of a pyrrolizidine ring system and an uncommon ether bridge linking carbons 2 and 7. Lolines are structurally differentiated by the various modifications of the L-amino group and include norloline, loline, N-methylloline, N-acetylloline, N-acetylnorloline, and N-formylloline. The first committed step is the condensation of O-acetyl-L-homoserine (derived from L-aspartic acid) and L-proline, probably catalyzed by the gamma-type pyridoxal 5'-phosphate(PLP)-dependent enzyme lolC, to give the diamino diacid, NACPP. Ensuing cyclization, decarboxylation, and acetylation steps yield 1-exo-acetamidopyrrolizidine (AcAP). LolO is required for installation of the ether bridge upon the pathway intermediate, 1-exo-acetamidopyrrolizidine (AcAP). In sequential 2-oxoglutarate- and O(2)-consuming steps, lolO removes hydrogens from C2 and C7 of AcAP to form both carbon-oxygen bonds in N-acetylnorloline (NANL), the precursor to all other lolines. The enzymes lolD, lolE, lolF and lolT have also been proposed to be involved in the ether-bridge installation. Further processing of the exocyclic moiety of NANL by fungal N-acetamidase (LolN), methyltransferase (LolM), and cytochrome P450 (LolP) enzymes, with occasional involvement of a plant acetyltransferase, generates the other known lolines. LolN transforms NANL to norlonine which is monomethylated and dimethylated to respectively lonine and N-methyllonine (NML) by lolM. LolP catalyzes hydroxylation of the methyl group in N-methylloline (NML) and further oxygenation to N-formylloline (NFL). A plant acetyltransferase is responsible for the acetylation of loline to form N-acetylloline (NAL). LolA might interact with aspartate kinase to prevent feedback inhibition of its activity by these end products and thereby promote production of L-homoserine from L-aspartate. The sequence is that of FAD-binding monooxygenase lolF1 from Epichloe uncinata (Endophyte fungus).